The sequence spans 205 residues: NADH dehydrogenase (205 aa).

FMN-binding positions include 17–21 (RRSIR), Gln73, 158–159 (LG), and Arg195.

This sequence belongs to the nitroreductase family. As to quaternary structure, homodimer. FMN is required as a cofactor.

It catalyses the reaction a ubiquinone + NADH + 5 H(+)(in) = a ubiquinol + NAD(+) + 4 H(+)(out). Can oxidize either NADH or NADPH with a preference for NADH. Can catalyze electron transfer from NADH to various electron acceptors which include, in addition to molecular oxygen, cytochrome c, 2,6 dichlorphenolindophenol, methylene blue, ferricyanide or P-nitroblue tetrazolium. The chain is NADH dehydrogenase (nox) from Thermus thermophilus (strain ATCC 27634 / DSM 579 / HB8).